Here is a 132-residue protein sequence, read N- to C-terminus: Small ribosomal subunit protein uS8 (132 aa).

This sequence belongs to the universal ribosomal protein uS8 family. In terms of assembly, part of the 30S ribosomal subunit. Contacts proteins S5 and S12.

One of the primary rRNA binding proteins, it binds directly to 16S rRNA central domain where it helps coordinate assembly of the platform of the 30S subunit. The protein is Small ribosomal subunit protein uS8 of Paramagnetospirillum magneticum (strain ATCC 700264 / AMB-1) (Magnetospirillum magneticum).